The following is a 282-amino-acid chain: Probable methylxanthine N7-demethylase NdmC (282 aa).

It carries out the reaction 7-methylxanthine + NADPH + O2 + H(+) = xanthine + formaldehyde + NADP(+) + H2O. The enzyme catalyses 7-methylxanthine + NADH + O2 + H(+) = xanthine + formaldehyde + NAD(+) + H2O. In terms of biological role, involved in the caffeine degradation, which is the essential first step for assimilating the carbon and nitrogen in caffeine. Probably catalyzes the N7-demethylation of 7-methylxanthine to produce xanthine and formaldehyde. This is Probable methylxanthine N7-demethylase NdmC from Pseudomonas sp. (strain TJI-51).